A 213-amino-acid chain; its full sequence is Succinate dehydrogenase subunit 3-1, mitochondrial (213 aa).

Residues 1-105 (MAATALFRSI…LDVGTSKRLF (105 aa)) constitute a mitochondrion transit peptide. Histidine 130 is a heme binding site. Residues 148–165 (ISGVYLTGVTFAGYLLYL) traverse the membrane as a helical segment.

Component of complex II composed of eight subunits in plants: four classical SDH subunits SDH1, SDH2, SDH3 and SDH4 (a flavoprotein (FP), an iron-sulfur protein (IP), and a cytochrome b composed of a large and a small subunit.), as well as four subunits unknown in mitochondria from bacteria and heterotrophic eukaryotes. Requires heme as cofactor. As to expression, expressed in flowers, inflorescences and stems.

The protein localises to the mitochondrion inner membrane. The protein operates within carbohydrate metabolism; tricarboxylic acid cycle. In terms of biological role, membrane-anchoring subunit of succinate dehydrogenase (SDH). The sequence is that of Succinate dehydrogenase subunit 3-1, mitochondrial from Arabidopsis thaliana (Mouse-ear cress).